Reading from the N-terminus, the 503-residue chain is Activin receptor type-1-like (503 aa).

Positions 1–21 (MTLGSPRKGLLMLLMALVTQG) are cleaved as a signal peptide. Topologically, residues 22–118 (DPVKPSRGPL…PSEQPGTDGQ (97 aa)) are extracellular. Cystine bridges form between Cys-34-Cys-51, Cys-36-Cys-41, and Cys-46-Cys-69. A mediates specificity for BMP ligand region spans residues 73–76 (HREL). 2 disulfides stabilise this stretch: Cys-77/Cys-89 and Cys-90/Cys-95. N-linked (GlcNAc...) asparagine glycosylation is present at Asn-98. Residues 119–141 (LALILGPVLALLALVALGVLGLW) traverse the membrane as a helical segment. At 142 to 503 (HVRRRQEKQR…NSPEKPKVIQ (362 aa)) the chain is on the cytoplasmic side. Phosphoserine occurs at positions 155, 160, and 161. Residues 172-201 (SMLGDLLDSDCTTGSGSGLPFLVQRTVARQ) form the GS domain. A Protein kinase domain is found at 202-492 (VALVECVGKG…LRIKKTLQKI (291 aa)). ATP contacts are provided by residues 208–216 (VGKGRYGEV) and Lys-229. The active-site Proton acceptor is Asp-330.

It belongs to the protein kinase superfamily. TKL Ser/Thr protein kinase family. TGFB receptor subfamily. As to quaternary structure, interacts with TSC22D1/TSC-22. Mg(2+) is required as a cofactor. It depends on Mn(2+) as a cofactor.

The protein localises to the cell membrane. It catalyses the reaction L-threonyl-[receptor-protein] + ATP = O-phospho-L-threonyl-[receptor-protein] + ADP + H(+). The catalysed reaction is L-seryl-[receptor-protein] + ATP = O-phospho-L-seryl-[receptor-protein] + ADP + H(+). Its function is as follows. Type I receptor for TGF-beta family ligands BMP9/GDF2 and BMP10 and important regulator of normal blood vessel development. On ligand binding, forms a receptor complex consisting of two type II and two type I transmembrane serine/threonine kinases. Type II receptors phosphorylate and activate type I receptors which autophosphorylate, then bind and activate SMAD transcriptional regulators. May bind activin as well. The sequence is that of Activin receptor type-1-like (ACVRL1) from Homo sapiens (Human).